The chain runs to 430 residues: Adenylosuccinate synthetase (430 aa).

GTP-binding positions include 13–19 (GDEGKGK) and 41–43 (GHT). Aspartate 14 functions as the Proton acceptor in the catalytic mechanism. Mg(2+) is bound by residues aspartate 14 and glycine 41. Residues 14–17 (DEGK), 39–42 (NAGH), threonine 130, arginine 144, glutamine 225, threonine 240, and arginine 304 each bind IMP. Catalysis depends on histidine 42, which acts as the Proton donor. Substrate is bound at residue 300 to 306 (STTGRAR). Residues arginine 306, 332-334 (KLD), and 414-416 (STG) each bind GTP.

Belongs to the adenylosuccinate synthetase family. As to quaternary structure, homodimer. Mg(2+) serves as cofactor.

It is found in the cytoplasm. The enzyme catalyses IMP + L-aspartate + GTP = N(6)-(1,2-dicarboxyethyl)-AMP + GDP + phosphate + 2 H(+). Its pathway is purine metabolism; AMP biosynthesis via de novo pathway; AMP from IMP: step 1/2. In terms of biological role, plays an important role in the de novo pathway of purine nucleotide biosynthesis. Catalyzes the first committed step in the biosynthesis of AMP from IMP. The sequence is that of Adenylosuccinate synthetase from Pseudomonas entomophila (strain L48).